A 136-amino-acid chain; its full sequence is uncharacterized protein (136 aa).

Helical transmembrane passes span 25 to 47 (ILKA…PHAF) and 78 to 97 (ITGA…LLTA).

It localises to the cell membrane. This is an uncharacterized protein from Bacillus subtilis (strain 168).